A 96-amino-acid polypeptide reads, in one-letter code: Aspartyl/glutamyl-tRNA(Asn/Gln) amidotransferase subunit C (96 aa).

This sequence belongs to the GatC family. In terms of assembly, heterotrimer of A, B and C subunits.

The enzyme catalyses L-glutamyl-tRNA(Gln) + L-glutamine + ATP + H2O = L-glutaminyl-tRNA(Gln) + L-glutamate + ADP + phosphate + H(+). It carries out the reaction L-aspartyl-tRNA(Asn) + L-glutamine + ATP + H2O = L-asparaginyl-tRNA(Asn) + L-glutamate + ADP + phosphate + 2 H(+). Functionally, allows the formation of correctly charged Asn-tRNA(Asn) or Gln-tRNA(Gln) through the transamidation of misacylated Asp-tRNA(Asn) or Glu-tRNA(Gln) in organisms which lack either or both of asparaginyl-tRNA or glutaminyl-tRNA synthetases. The reaction takes place in the presence of glutamine and ATP through an activated phospho-Asp-tRNA(Asn) or phospho-Glu-tRNA(Gln). In Aliarcobacter butzleri (strain RM4018) (Arcobacter butzleri), this protein is Aspartyl/glutamyl-tRNA(Asn/Gln) amidotransferase subunit C.